The sequence spans 215 residues: Peroxiredoxin (215 aa).

A Thioredoxin domain is found at 6 to 161; that stretch reads PLIGEEFPRL…ILRAVRALQT (156 aa). The active-site Cysteine sulfenic acid (-SOH) intermediate is Cys-48. Arg-124 provides a ligand contact to substrate. A disulfide bridge links Cys-205 with Cys-211.

The protein belongs to the peroxiredoxin family. Prx6 subfamily. In terms of assembly, homodecamer. Pentamer of dimers that assemble into a ring structure.

Its subcellular location is the cytoplasm. It carries out the reaction a hydroperoxide + [thioredoxin]-dithiol = an alcohol + [thioredoxin]-disulfide + H2O. Its function is as follows. Thiol-specific peroxidase that catalyzes the reduction of hydrogen peroxide and organic hydroperoxides to water and alcohols, respectively. Plays a role in cell protection against oxidative stress by detoxifying peroxides. The polypeptide is Peroxiredoxin (Thermotoga petrophila (strain ATCC BAA-488 / DSM 13995 / JCM 10881 / RKU-1)).